The primary structure comprises 105 residues: Chloroacetanilide N-alkylformylase 1, ferredoxin component (105 aa).

The 2Fe-2S ferredoxin-type domain maps to 2–105; that stretch reads PTIIVTTRDG…GLRVAIAPED (104 aa). [2Fe-2S] cluster-binding residues include cysteine 40, cysteine 46, cysteine 49, and cysteine 86.

It belongs to the adrenodoxin/putidaredoxin family. The chloroacetanilide N-alkylformylase multicomponent enzyme system is composed of an oxygenase component (CndA) and an electron transfer component formed by a ferredoxin reductase (CndC1) and a ferredoxin (CndB1). In vitro, chloroacetanilide N-alkylformylase assays in which CndB1 is substituted for CndB2 demonstrate that the two enzymes possess nearly identical activities. Requires [2Fe-2S] cluster as cofactor.

Functionally, component of the chloroacetanilide N-alkylformylase multicomponent enzyme system involved in the degradation of chloroacetanilide herbicides (N-alkoxyalkyl-N-chloroacetyl-substituted aniline derivatives). In vitro, functions as an intermediate electron transfer protein. This Rhizorhabdus wittichii (strain DC-6 / KACC 16600) (Sphingomonas wittichii) protein is Chloroacetanilide N-alkylformylase 1, ferredoxin component.